Here is a 101-residue protein sequence, read N- to C-terminus: Ribonuclease kappa-B (101 aa).

The next 2 membrane-spanning stretches (helical) occupy residues 13 to 33 (ACGIVLSVWGVIMLSMLGIFF) and 68 to 88 (VGINCFIAAAIYVGVGAVSLC).

The protein belongs to the RNase K family.

It is found in the membrane. Endoribonuclease which preferentially cleaves ApU and ApG phosphodiester bonds. In Danio rerio (Zebrafish), this protein is Ribonuclease kappa-B (rnasekb).